The following is a 183-amino-acid chain: D-glycero-alpha-D-manno-heptose-1,7-bisphosphate 7-phosphatase (183 aa).

Zn(2+)-binding residues include Cys-93, His-95, Cys-108, and Cys-110.

Belongs to the GmhB family.

The protein resides in the cytoplasm. It catalyses the reaction D-glycero-alpha-D-manno-heptose 1,7-bisphosphate + H2O = D-glycero-alpha-D-manno-heptose 1-phosphate + phosphate. It functions in the pathway nucleotide-sugar biosynthesis; GDP-D-glycero-alpha-D-manno-heptose biosynthesis; GDP-D-glycero-alpha-D-manno-heptose from D-glycero-alpha-D-manno-heptose 7-phosphate: step 2/3. Its function is as follows. Converts the D-glycero-alpha-D-manno-heptose 1,7-bisphosphate intermediate into D-glycero-alpha-D-manno-heptose 1-phosphate by removing the phosphate group at the C-7 position. This chain is D-glycero-alpha-D-manno-heptose-1,7-bisphosphate 7-phosphatase (gmhB2), found in Photorhabdus laumondii subsp. laumondii (strain DSM 15139 / CIP 105565 / TT01) (Photorhabdus luminescens subsp. laumondii).